The primary structure comprises 758 residues: 5-methyltetrahydropteroyltriglutamate--homocysteine methyltransferase (758 aa).

Residues 17–20 (RELK) and Lys-117 each bind 5-methyltetrahydropteroyltri-L-glutamate. L-homocysteine contacts are provided by residues 434-436 (IGS) and Glu-487. L-methionine contacts are provided by residues 434-436 (IGS) and Glu-487. Residues 518 to 519 (RC) and Trp-564 contribute to the 5-methyltetrahydropteroyltri-L-glutamate site. Asp-602 is a binding site for L-homocysteine. L-methionine is bound at residue Asp-602. Glu-608 is a binding site for 5-methyltetrahydropteroyltri-L-glutamate. Zn(2+)-binding residues include His-644, Cys-646, and Glu-668. His-697 functions as the Proton donor in the catalytic mechanism. Zn(2+) is bound at residue Cys-729.

The protein belongs to the vitamin-B12 independent methionine synthase family. It depends on Zn(2+) as a cofactor.

It catalyses the reaction 5-methyltetrahydropteroyltri-L-glutamate + L-homocysteine = tetrahydropteroyltri-L-glutamate + L-methionine. Its pathway is amino-acid biosynthesis; L-methionine biosynthesis via de novo pathway; L-methionine from L-homocysteine (MetE route): step 1/1. Its function is as follows. Catalyzes the transfer of a methyl group from 5-methyltetrahydrofolate to homocysteine resulting in methionine formation. In Yersinia pseudotuberculosis serotype O:1b (strain IP 31758), this protein is 5-methyltetrahydropteroyltriglutamate--homocysteine methyltransferase.